We begin with the raw amino-acid sequence, 542 residues long: Chaperonin GroEL (542 aa).

Residues 29–32 (TMGP), 86–90 (DGTTT), glycine 413, 476–478 (NAA), and aspartate 492 each bind ATP. The segment at 521–542 (KPDPNANNQAPAAPQGGMGGMM) is disordered. Residues 524–535 (PNANNQAPAAPQ) show a composition bias toward low complexity.

It belongs to the chaperonin (HSP60) family. In terms of assembly, forms a cylinder of 14 subunits composed of two heptameric rings stacked back-to-back. Interacts with the co-chaperonin GroES.

It localises to the cytoplasm. It carries out the reaction ATP + H2O + a folded polypeptide = ADP + phosphate + an unfolded polypeptide.. In terms of biological role, together with its co-chaperonin GroES, plays an essential role in assisting protein folding. The GroEL-GroES system forms a nano-cage that allows encapsulation of the non-native substrate proteins and provides a physical environment optimized to promote and accelerate protein folding. The chain is Chaperonin GroEL from Limosilactobacillus reuteri subsp. reuteri (strain JCM 1112) (Lactobacillus reuteri).